A 134-amino-acid polypeptide reads, in one-letter code: Small ribosomal subunit protein uS8c (134 aa).

It belongs to the universal ribosomal protein uS8 family. Part of the 30S ribosomal subunit.

The protein resides in the plastid. Functionally, one of the primary rRNA binding proteins, it binds directly to 16S rRNA central domain where it helps coordinate assembly of the platform of the 30S subunit. This Cuscuta gronovii (Common dodder) protein is Small ribosomal subunit protein uS8c (rps8).